The sequence spans 493 residues: Probable cytosol aminopeptidase (493 aa).

Residues Lys265 and Asp270 each coordinate Mn(2+). Residue Lys277 is part of the active site. Residues Asp288, Asp347, and Glu349 each contribute to the Mn(2+) site. Arg351 is an active-site residue.

This sequence belongs to the peptidase M17 family. Requires Mn(2+) as cofactor.

The protein resides in the cytoplasm. The catalysed reaction is Release of an N-terminal amino acid, Xaa-|-Yaa-, in which Xaa is preferably Leu, but may be other amino acids including Pro although not Arg or Lys, and Yaa may be Pro. Amino acid amides and methyl esters are also readily hydrolyzed, but rates on arylamides are exceedingly low.. It carries out the reaction Release of an N-terminal amino acid, preferentially leucine, but not glutamic or aspartic acids.. Presumably involved in the processing and regular turnover of intracellular proteins. Catalyzes the removal of unsubstituted N-terminal amino acids from various peptides. The polypeptide is Probable cytosol aminopeptidase (Hydrogenovibrio crunogenus (strain DSM 25203 / XCL-2) (Thiomicrospira crunogena)).